Here is a 291-residue protein sequence, read N- to C-terminus: 4-hydroxy-tetrahydrodipicolinate synthase (291 aa).

Residue Thr45 participates in pyruvate binding. Tyr131 acts as the Proton donor/acceptor in catalysis. Catalysis depends on Lys159, which acts as the Schiff-base intermediate with substrate. Pyruvate is bound at residue Ile202.

This sequence belongs to the DapA family. Homotetramer; dimer of dimers.

The protein localises to the cytoplasm. It carries out the reaction L-aspartate 4-semialdehyde + pyruvate = (2S,4S)-4-hydroxy-2,3,4,5-tetrahydrodipicolinate + H2O + H(+). It participates in amino-acid biosynthesis; L-lysine biosynthesis via DAP pathway; (S)-tetrahydrodipicolinate from L-aspartate: step 3/4. Catalyzes the condensation of (S)-aspartate-beta-semialdehyde [(S)-ASA] and pyruvate to 4-hydroxy-tetrahydrodipicolinate (HTPA). The protein is 4-hydroxy-tetrahydrodipicolinate synthase of Methanosarcina barkeri (strain Fusaro / DSM 804).